The following is a 386-amino-acid chain: S-adenosylmethionine synthase (386 aa).

Histidine 14 is an ATP binding site. Mg(2+) is bound at residue aspartate 16. Residue glutamate 42 coordinates K(+). 2 residues coordinate L-methionine: glutamate 55 and glutamine 98. The interval 98–108 (QSGDISQGVDG) is flexible loop. Residues 162-164 (DSK), 230-231 (RF), aspartate 239, 245-246 (RK), alanine 262, and lysine 266 each bind ATP. Aspartate 239 is an L-methionine binding site. Position 270 (lysine 270) interacts with L-methionine.

This sequence belongs to the AdoMet synthase family. Homotetramer; dimer of dimers. The cofactor is Mg(2+). K(+) is required as a cofactor.

The protein localises to the cytoplasm. It carries out the reaction L-methionine + ATP + H2O = S-adenosyl-L-methionine + phosphate + diphosphate. It participates in amino-acid biosynthesis; S-adenosyl-L-methionine biosynthesis; S-adenosyl-L-methionine from L-methionine: step 1/1. Its function is as follows. Catalyzes the formation of S-adenosylmethionine (AdoMet) from methionine and ATP. The overall synthetic reaction is composed of two sequential steps, AdoMet formation and the subsequent tripolyphosphate hydrolysis which occurs prior to release of AdoMet from the enzyme. The sequence is that of S-adenosylmethionine synthase from Salinibacter ruber (strain DSM 13855 / M31).